A 1007-amino-acid chain; its full sequence is Serine/threonine-protein kinase PRP4 homolog (1007 aa).

Residues 1–10 show a composition bias toward polar residues; it reads MAAAETQSLR. The tract at residues 1 to 99 is disordered; sequence MAAAETQSLR…EGMSPAKRTK (99 aa). Ala-2 bears the N-acetylalanine mark. 4 positions are modified to phosphoserine: Ser-8, Ser-20, Ser-23, and Ser-32. Composition is skewed to basic residues over residues 39 to 59 and 67 to 81; these read KHSR…KHKH and KKHK…HKRK. Residues 82–91 are compositionally biased toward basic and acidic residues; that stretch reads EIIDASDKEG. Phosphoserine is present on residues Ser-87 and Ser-93. Lys-99 is modified (N6-acetyllysine; alternate). Lys-99 is covalently cross-linked (Glycyl lysine isopeptide (Lys-Gly) (interchain with G-Cter in SUMO2); alternate). A Glycyl lysine isopeptide (Lys-Gly) (interchain with G-Cter in SUMO2) cross-link involves residue Lys-111. Lys-117 participates in a covalent cross-link: Glycyl lysine isopeptide (Lys-Gly) (interchain with G-Cter in SUMO2); alternate. Lys-117 participates in a covalent cross-link: Glycyl lysine isopeptide (Lys-Gly) (interchain with G-Cter in SUMO1); alternate. Phosphoserine is present on Ser-131. Position 140 is a phosphotyrosine (Tyr-140). 2 disordered regions span residues 140–533 and 559–583; these read YESG…EEED and SNMS…SPDD. Phosphoserine occurs at positions 142, 144, and 166. The segment covering 157–168 has biased composition (low complexity); that stretch reads GNRSSTRSSSTK. Glycyl lysine isopeptide (Lys-Gly) (interchain with G-Cter in SUMO2) cross-links involve residues Lys-170 and Lys-177. Basic residues-rich tracts occupy residues 179–202 and 214–230; these read TTKK…KKSK and RSKS…SKRS. A phosphoserine mark is found at Ser-239, Ser-241, Ser-257, Ser-277, Ser-283, Ser-292, and Ser-294. Over residues 247–270 the composition is skewed to basic and acidic residues; sequence RSQEKIGKARSPTDDKVKIEDKSK. A compositionally biased stretch (basic residues) spans 302 to 315; sequence SKDRRSRSKERKSK. Residues 316–325 show a composition bias toward basic and acidic residues; the sequence is RSETDKEKKP. Residues Ser-328, Ser-354, Ser-356, Ser-366, and Ser-368 each carry the phosphoserine modification. Residues 342-367 show a composition bias toward basic residues; it reads PSRRPGRSPKRRSLSPKPRDKSRRSR. Phosphothreonine is present on Thr-385. Ser-387 is modified (phosphoserine). 2 stretches are compositionally biased toward basic and acidic residues: residues 395-408 and 415-429; these read RSLE…ERRR and RPRD…RSKD. Ser-427, Ser-431, and Ser-437 each carry phosphoserine. Over residues 438 to 497 the composition is skewed to basic residues; that stretch reads PTRRRSRSPIRRRSRSPLRRSRSPRRRSRSPRRRDRGRRSRSRLRRRSRSRGGRRRRSRS. Phosphoserine occurs at positions 518, 519, 520, 565, 569, 578, and 580. A compositionally biased stretch (acidic residues) spans 518-533; it reads SSSDDNLEDFDVEEED. Positions 562 to 581 are enriched in low complexity; the sequence is SVPSEPSSPQSSTRTRSPSP. Glycyl lysine isopeptide (Lys-Gly) (interchain with G-Cter in SUMO2) cross-links involve residues Lys-593 and Lys-659. The Protein kinase domain maps to 687 to 1006; the sequence is YNVYGYTGQG…ALQHAFIQEK (320 aa). ATP is bound by residues 693–701 and Lys-717; that span reads TGQGVFSNV. At Lys-717 the chain carries N6-acetyllysine. Asp-815 acts as the Proton acceptor in catalysis. Tyr-849 is subject to Phosphotyrosine. The residue at position 852 (Ser-852) is a Phosphoserine.

The protein belongs to the protein kinase superfamily. CMGC Ser/Thr protein kinase family. In terms of assembly, interacts with CLK1 C-terminus. Associates with the U5 snRNP and NCOR1 deacetylase complexes. Identified in the spliceosome C complex. In terms of processing, phosphorylated by CLK1. Autophosphorylated; phosphorylation inhibits interaction with its targets, such as PRPF6 or SMARCA4. Ubiquitous.

It localises to the nucleus. The protein resides in the chromosome. The protein localises to the centromere. It is found in the kinetochore. It catalyses the reaction L-seryl-[protein] + ATP = O-phospho-L-seryl-[protein] + ADP + H(+). It carries out the reaction L-threonyl-[protein] + ATP = O-phospho-L-threonyl-[protein] + ADP + H(+). In terms of biological role, serine/threonine kinase involved in spliceosomal assembly as well as mitosis and signaling regulation. Connects chromatin mediated regulation of transcription and pre-mRNA splicing. During spliceosomal assembly, interacts with and phosphorylates PRPF6 and PRPF31, components of the U4/U6-U5 tri-small nuclear ribonucleoprotein (snRNP), to facilitate the formation of the spliceosome B complex. Plays a role in regulating transcription and the spindle assembly checkpoint (SAC). Associates with U5 snRNP and NCOR1 deacetylase complexes which may allow a coordination of pre-mRNA splicing with chromatin remodeling events involved in transcriptional regulation. Associates and probably phosphorylates SMARCA4 and NCOR1. Phosphorylates SRSF1. Associates with kinetochores during mitosis and is necessary for recruitment and maintenance of the checkpoint proteins such as MAD1L1 and MAD12L1 at the kinetochores. Phosphorylates and regulates the activity of the transcription factors such as ELK1 and KLF13. Phosphorylates nuclear YAP1 and WWTR1/TAZ which induces nuclear exclusion and regulates Hippo signaling pathway, involved in tissue growth control. This is Serine/threonine-protein kinase PRP4 homolog from Homo sapiens (Human).